Reading from the N-terminus, the 208-residue chain is Thymidylate kinase (208 aa).

An ATP-binding site is contributed by 10-17; that stretch reads GLEGAGKS.

The protein belongs to the thymidylate kinase family.

It catalyses the reaction dTMP + ATP = dTDP + ADP. In terms of biological role, phosphorylation of dTMP to form dTDP in both de novo and salvage pathways of dTTP synthesis. This is Thymidylate kinase from Glaesserella parasuis serovar 5 (strain SH0165) (Haemophilus parasuis).